The chain runs to 107 residues: Acidic phospholipase A2 braziliase-I (107 aa).

Disulfide bonds link Cys26-Cys100, Cys28-Cys44, Cys43-Cys86, Cys49-Cys107, Cys50-Cys79, Cys57-Cys72, and Cys66-Cys77. Ca(2+) contacts are provided by Tyr27, Gly29, and Gly31. His47 is an active-site residue. Asp48 lines the Ca(2+) pocket. Asp80 is an active-site residue.

In terms of assembly, monomer. The cofactor is Ca(2+). As to expression, expressed by the venom gland.

The protein resides in the secreted. It catalyses the reaction a 1,2-diacyl-sn-glycero-3-phosphocholine + H2O = a 1-acyl-sn-glycero-3-phosphocholine + a fatty acid + H(+). In terms of biological role, snake venom phospholipase A2 (PLA2) that induces significant edematogenic activity. Shows mild cytotoxicity on Trypanosoma cruzi and Leishmania infantum. Also inhibits ADP- and collagen-induced platelet aggregation. Does not show myotoxic activity. The protein is Acidic phospholipase A2 braziliase-I of Bothrops brazili (Brazil's lancehead).